We begin with the raw amino-acid sequence, 288 residues long: Probable ketoamine kinase SAOUHSC_02908 (288 aa).

Position 86-88 (86-88 (TYL)) interacts with ATP. Residue Asp191 is the Proton acceptor of the active site.

The protein belongs to the fructosamine kinase family.

The enzyme catalyses N(6)-(D-ribulosyl)-L-lysine + ATP = N(6)-(3-O-phospho-D-ribulosyl)-L-lysine + ADP + H(+). It carries out the reaction N(6)-(D-erythrulosyl)-L-lysine + ATP = N(6)-(3-O-phospho-D-erythrulosyl)-L-lysine + ADP + H(+). The catalysed reaction is N(6)-D-ribulosyl-L-lysyl-[protein] + ATP = N(6)-(3-O-phospho-D-ribulosyl)-L-lysyl-[protein] + ADP + H(+). It catalyses the reaction N(6)-(D-erythrulosyl)-L-lysyl-[protein] + ATP = N(6)-(3-O-phospho-D-erythrulosyl)-L-lysyl-[protein] + ADP + H(+). Ketoamine kinase that phosphorylates ketoamines, such as erythruloselysine and ribuloselysine, on the third carbon of the sugar moiety to generate ketoamine 3-phosphate. Has higher activity on free lysine (erythruloselysine and ribuloselysine), than on ribuloselysine and erythruloselysine residues on glycated proteins. The polypeptide is Probable ketoamine kinase SAOUHSC_02908 (Staphylococcus aureus (strain NCTC 8325 / PS 47)).